The following is a 266-amino-acid chain: uncharacterized protein (266 aa).

A PH domain is found at 35-131 (VLVGEGVLVK…WMLHIERCVT (97 aa)). The segment at 152 to 212 (DGEAVKCMVC…VCDHCFDSLS (61 aa)) adopts an FYVE-type zinc-finger fold. Residues Cys-158, Cys-161, Cys-175, Cys-178, Cys-183, Cys-186, Cys-204, and Cys-207 each contribute to the Zn(2+) site. Residues 213–266 (SATPGQEESEPKTGNRLHHEDSSSDSEDEVNGSGRSSNESRPTFYREDVQQPAT) are disordered. 2 stretches are compositionally biased toward basic and acidic residues: residues 221 to 234 (SEPK…HEDS) and 256 to 266 (FYREDVQQPAT).

This is an uncharacterized protein from Caenorhabditis elegans.